We begin with the raw amino-acid sequence, 431 residues long: tRNA(Ile)-lysidine synthase (431 aa).

19-24 provides a ligand contact to ATP; that stretch reads STGIDS.

Belongs to the tRNA(Ile)-lysidine synthase family.

Its subcellular location is the cytoplasm. The catalysed reaction is cytidine(34) in tRNA(Ile2) + L-lysine + ATP = lysidine(34) in tRNA(Ile2) + AMP + diphosphate + H(+). Ligates lysine onto the cytidine present at position 34 of the AUA codon-specific tRNA(Ile) that contains the anticodon CAU, in an ATP-dependent manner. Cytidine is converted to lysidine, thus changing the amino acid specificity of the tRNA from methionine to isoleucine. The protein is tRNA(Ile)-lysidine synthase of Staphylococcus aureus (strain MW2).